Consider the following 408-residue polypeptide: Tyrosine--tRNA ligase (408 aa).

Tyrosine 35 is an L-tyrosine binding site. A 'HIGH' region motif is present at residues 40 to 49 (PTADSLHVGH). L-tyrosine contacts are provided by tyrosine 168 and glutamine 172. Positions 228-232 (KMGKT) match the 'KMSKS' region motif. Lysine 231 contributes to the ATP binding site. Residues 342–407 (INIIDLLLKT…GKKTYHRVKL (66 aa)) form the S4 RNA-binding domain.

This sequence belongs to the class-I aminoacyl-tRNA synthetase family. TyrS type 1 subfamily. As to quaternary structure, homodimer.

The protein resides in the cytoplasm. It carries out the reaction tRNA(Tyr) + L-tyrosine + ATP = L-tyrosyl-tRNA(Tyr) + AMP + diphosphate + H(+). Functionally, catalyzes the attachment of tyrosine to tRNA(Tyr) in a two-step reaction: tyrosine is first activated by ATP to form Tyr-AMP and then transferred to the acceptor end of tRNA(Tyr). The protein is Tyrosine--tRNA ligase of Acetivibrio thermocellus (strain ATCC 27405 / DSM 1237 / JCM 9322 / NBRC 103400 / NCIMB 10682 / NRRL B-4536 / VPI 7372) (Clostridium thermocellum).